The sequence spans 907 residues: Envelope glycoprotein B (907 aa).

A signal peptide spans 1–24 (MESRIWCLVVCVNLCIVCLGAAVS). Residues 25–751 (SSSTRGTSAT…EGVATFLKNP (727 aa)) lie on the Virion surface side of the membrane. A disordered region spans residues 29–62 (RGTSATHSHHSSHTTSAAHSRSGSVSQRVTSSQT). The segment covering 41–62 (HTTSAAHSRSGSVSQRVTSSQT) has biased composition (low complexity). Asparagine 68, asparagine 73, and asparagine 85 each carry an N-linked (GlcNAc...) asparagine; by host glycan. 4 cysteine pairs are disulfide-bonded: cysteine 94/cysteine 551, cysteine 111/cysteine 507, cysteine 185/cysteine 250, and cysteine 344/cysteine 391. Positions 152–158 (SYAYIHT) are involved in fusion and/or binding to host membrane. A glycan (N-linked (GlcNAc...) asparagine; by host) is linked at asparagine 208. Positions 237–244 (GSTWLYRE) are involved in fusion and/or binding to host membrane. N-linked (GlcNAc...) asparagine; by host glycosylation is found at asparagine 281, asparagine 286, asparagine 302, asparagine 341, asparagine 383, asparagine 405, asparagine 409, asparagine 417, asparagine 447, asparagine 452, asparagine 456, asparagine 466, asparagine 555, and asparagine 586. A disulfide bridge links cysteine 574 with cysteine 611. Residues 697–749 (VEDKVVDPLPPYLKGLDDLMSGLGAAGKAVGVAIGAVGGAVASVVEGVATFLK) are hydrophobic membrane proximal region. Residues 752 to 772 (FGAFTIILVAIAVVIITYLIY) traverse the membrane as a helical segment. The Intravirion portion of the chain corresponds to 773-907 (TRQRRLCTQP…LKDSDEEENV (135 aa)). Composition is skewed to polar residues over residues 798–810 (VTSG…SLQA) and 860–877 (RAQQ…GTQD). Disordered regions lie at residues 798 to 838 (VTSG…TAAP) and 857 to 907 (AEQR…EENV). The span at 878–887 (KGQKPNLLDR) shows a compositional bias: basic and acidic residues. The Internalization motif motif lies at 895 to 898 (YRHL).

Belongs to the herpesviridae glycoprotein B family. In terms of assembly, homotrimer; disulfide-linked. Binds to heparan sulfate proteoglycans. Interacts with gH/gL heterodimer. In terms of processing, a proteolytic cleavage by host furin generates two subunits that remain linked by disulfide bonds.

It localises to the virion membrane. It is found in the host cell membrane. The protein resides in the host endosome membrane. Its subcellular location is the host Golgi apparatus membrane. Its function is as follows. Envelope glycoprotein that forms spikes at the surface of virion envelope. Essential for the initial attachment to heparan sulfate moieties of the host cell surface proteoglycans. Involved in fusion of viral and cellular membranes leading to virus entry into the host cell. Following initial binding to its host receptors, membrane fusion is mediated by the fusion machinery composed at least of gB and the heterodimer gH/gL. May be involved in the fusion between the virion envelope and the outer nuclear membrane during virion egress. This is Envelope glycoprotein B from Human cytomegalovirus (strain Merlin) (HHV-5).